A 139-amino-acid chain; its full sequence is MDDTDLQILSHLQRNGRLTMVELGKLVGLSSPSAAERVRKLEDKGVITGYSANICYEKLNKHVTAFILMEPKSCKHYAAFATSHPDVAENHRITGMYSYVTKVVTESVHTLEDFIDTSMAHGKPTTLVVLSSSSCHPAF.

Residues Met-1–His-62 form the HTH asnC-type domain. Residues Met-20–Arg-39 constitute a DNA-binding region (H-T-H motif).

This is an uncharacterized protein from Bacillus subtilis (strain 168).